The following is a 344-amino-acid chain: Arginine N-succinyltransferase (344 aa).

A succinyl-CoA-binding site is contributed by leucine 125. Residue histidine 229 is the Proton donor of the active site.

This sequence belongs to the arginine N-succinyltransferase family.

The catalysed reaction is succinyl-CoA + L-arginine = N(2)-succinyl-L-arginine + CoA + H(+). It functions in the pathway amino-acid degradation; L-arginine degradation via AST pathway; L-glutamate and succinate from L-arginine: step 1/5. In terms of biological role, catalyzes the transfer of succinyl-CoA to arginine to produce N(2)-succinylarginine. In Shigella dysenteriae serotype 1 (strain Sd197), this protein is Arginine N-succinyltransferase.